The sequence spans 483 residues: Chromatin structure-remodeling complex protein RSC6 (483 aa).

Disordered stretches follow at residues 142–183 (KRKR…EAES) and 273–309 (AQDGSNDAEDSSNENNNKNGAGDDDGVEGSTPKDKPE). A compositionally biased stretch (low complexity) spans 148–158 (SLSLPLNLQQP). The segment covering 171–180 (DNGEDEDSAE) has biased composition (acidic residues).

The protein to yeast SNF12. In terms of assembly, interacts directly with RSC8. Component of the two forms of the RSC complex composed of at least either RSC1 or RSC2, and ARP7, ARP9, LDB7, NPL6, RSC3, RSC30, RSC4, RSC58, RSC6, RSC8, RSC9, SFH1, STH1, HTL1 and probably RTT102. The complexes interact with histone and histone variant components of centromeric chromatin.

It is found in the nucleus. In terms of biological role, component of the chromatin structure-remodeling complex (RSC), which is involved in transcription regulation and nucleosome positioning. RSC is responsible for the transfer of a histone octamer from a nucleosome core particle to naked DNA. The reaction requires ATP and involves an activated RSC-nucleosome intermediate. Remodeling reaction also involves DNA translocation, DNA twist and conformational change. As a reconfigurer of centromeric and flanking nucleosomes, RSC complex is required both for proper kinetochore function in chromosome segregation and, via a PKC1-dependent signaling pathway, for organization of the cellular cytoskeleton. This subunit is essential for mitotic growth and suppresses formamide sensitivity of the RSC8 mutants. The chain is Chromatin structure-remodeling complex protein RSC6 (RSC6) from Saccharomyces cerevisiae (strain ATCC 204508 / S288c) (Baker's yeast).